Here is a 188-residue protein sequence, read N- to C-terminus: Succinate-acetate/proton symporter SatP (188 aa).

At 1–13 (MGNTKLANPAPLG) the chain is on the cytoplasmic side. Residues 14–34 (LMGFGMTTILLNLHNVGYFAL) form a helical membrane-spanning segment. Residue aspartate 35 is a topological domain, periplasmic. The chain crosses the membrane as a helical span at residues 36–56 (GIILAMGIFYGGIAQIFAGLL). The Cytoplasmic segment spans residues 57 to 63 (EYKKGNT). The chain crosses the membrane as a helical span at residues 64–84 (FGLTAFTSYGSFWLTLVAILL). Residues 85–97 (MPKLGLTDAPNAQ) are Periplasmic-facing. Residues 98–118 (FLGVYLGLWGVFTLFMFFGTL) traverse the membrane as a helical segment. Topologically, residues 119–122 (KGAR) are cytoplasmic. The chain crosses the membrane as a helical span at residues 123–143 (VLQFVFFSLTVLFALLAIGNI). Residues 144-148 (AGNAA) are Periplasmic-facing. Residues 149–169 (IIHFAGWIGLICGASAIYLAM) traverse the membrane as a helical segment. Residues 170–188 (GEVLNEQFGRTVLPIGESH) lie on the Cytoplasmic side of the membrane.

Belongs to the acetate uptake transporter (AceTr) (TC 2.A.96) family.

The protein resides in the cell inner membrane. Uptake of acetate and succinate. Transport is energetically dependent on the protonmotive force. The sequence is that of Succinate-acetate/proton symporter SatP (satP) from Escherichia coli O157:H7.